A 203-amino-acid polypeptide reads, in one-letter code: A-type ATP synthase subunit E (203 aa).

This sequence belongs to the V-ATPase E subunit family. In terms of assembly, has multiple subunits with at least A(3), B(3), C, D, E, F, H, I and proteolipid K(x).

It localises to the cell membrane. Component of the A-type ATP synthase that produces ATP from ADP in the presence of a proton gradient across the membrane. The chain is A-type ATP synthase subunit E from Desulfurococcus sp. (strain SY).